A 52-amino-acid polypeptide reads, in one-letter code: Large ribosomal subunit protein bL33 (52 aa).

The protein belongs to the bacterial ribosomal protein bL33 family.

The chain is Large ribosomal subunit protein bL33 (rpmG) from Chlamydia muridarum (strain MoPn / Nigg).